Here is a 282-residue protein sequence, read N- to C-terminus: Bifunctional protein FolD (282 aa).

NADP(+) contacts are provided by residues 165-167, Thr-192, and Val-233; that span reads GRG.

The protein belongs to the tetrahydrofolate dehydrogenase/cyclohydrolase family. In terms of assembly, homodimer.

It catalyses the reaction (6R)-5,10-methylene-5,6,7,8-tetrahydrofolate + NADP(+) = (6R)-5,10-methenyltetrahydrofolate + NADPH. The catalysed reaction is (6R)-5,10-methenyltetrahydrofolate + H2O = (6R)-10-formyltetrahydrofolate + H(+). The protein operates within one-carbon metabolism; tetrahydrofolate interconversion. In terms of biological role, catalyzes the oxidation of 5,10-methylenetetrahydrofolate to 5,10-methenyltetrahydrofolate and then the hydrolysis of 5,10-methenyltetrahydrofolate to 10-formyltetrahydrofolate. In Mycobacterium leprae (strain Br4923), this protein is Bifunctional protein FolD.